Reading from the N-terminus, the 381-residue chain is 3-isopropylmalate dehydrogenase (381 aa).

Residues R104, R114, R142, and D232 each coordinate substrate. Positions 232, 256, and 260 each coordinate Mg(2+). 290–302 contributes to the NAD(+) binding site; it reads GSAPDIAGQDKAN.

It belongs to the isocitrate and isopropylmalate dehydrogenases family. LeuB type 1 subfamily. Homodimer. Requires Mg(2+) as cofactor. Mn(2+) is required as a cofactor.

It is found in the cytoplasm. It carries out the reaction (2R,3S)-3-isopropylmalate + NAD(+) = 4-methyl-2-oxopentanoate + CO2 + NADH. The protein operates within amino-acid biosynthesis; L-leucine biosynthesis; L-leucine from 3-methyl-2-oxobutanoate: step 3/4. Its function is as follows. Catalyzes the oxidation of 3-carboxy-2-hydroxy-4-methylpentanoate (3-isopropylmalate) to 3-carboxy-4-methyl-2-oxopentanoate. The product decarboxylates to 4-methyl-2 oxopentanoate. This chain is 3-isopropylmalate dehydrogenase, found in Synechococcus sp. (strain JA-3-3Ab) (Cyanobacteria bacterium Yellowstone A-Prime).